The sequence spans 626 residues: Chaperone protein DnaK (626 aa).

Threonine 175 is subject to Phosphothreonine; by autocatalysis. 3 disordered regions span residues 469 to 488, 498 to 517, and 583 to 626; these read DKGT…GLPK, AEAH…TRNQ, and AQQG…KDNK. Residues 498 to 516 are compositionally biased toward basic and acidic residues; that stretch reads AEAHEAEDKKRKEDAETRN. Residues 609-626 are compositionally biased toward acidic residues; it reads SDDDVVDAEVVDDDKDNK.

It belongs to the heat shock protein 70 family.

In terms of biological role, acts as a chaperone. The sequence is that of Chaperone protein DnaK from Bifidobacterium adolescentis (strain ATCC 15703 / DSM 20083 / NCTC 11814 / E194a).